The chain runs to 137 residues: Acidic phospholipase A2 CC-PLA2-1 (137 aa).

The first 16 residues, 1 to 16 (MRTLWIVAVWLMGVEG), serve as a signal peptide directing secretion. Cystine bridges form between Cys-42–Cys-130, Cys-44–Cys-60, Cys-59–Cys-110, Cys-65–Cys-137, Cys-66–Cys-103, Cys-73–Cys-96, and Cys-90–Cys-101. Tyr-43, Gly-45, and Gly-47 together coordinate Ca(2+). The active site involves His-63. Position 64 (Asp-64) interacts with Ca(2+). The active site involves Asp-104.

It belongs to the phospholipase A2 family. Group II subfamily. D49 sub-subfamily. Ca(2+) serves as cofactor. In terms of processing, glycosylated (2.5%). In terms of tissue distribution, expressed by the venom gland.

Its subcellular location is the secreted. It carries out the reaction a 1,2-diacyl-sn-glycero-3-phosphocholine + H2O = a 1-acyl-sn-glycero-3-phosphocholine + a fatty acid + H(+). In terms of biological role, snake venom phospholipase A2 (PLA2) that inhibits blood coagulation and platelet aggregation induced by ADP and arachidonic acid. Inhibits tumor cell adhesion and migration in a dose-dependent manner. Abolishes the attachment of human brain microvascular endothelial cells (HBMEC) to fibrinogen (IC(50)=0.12 uM) and dramatically reduces its adhesion to fibronectin (IC(50)=0.12 uM), whereas no effect is observed on type I collagen, vitronectin or laminin 1. Also blocks the cell migration toward fibronectin and fibrinogen. These effects are not dependent of the catalytic activity, but are mediated by alpha-5/beta-1 (ITGA5/ITGB1) and alpha-v-containing (ITGAV) integrins. Also shows anti-angiogenic activity in chicken chorioallantoix membrane assay. Has a relatively high enzymatic activity. PLA2 catalyzes the calcium-dependent hydrolysis of the 2-acyl groups in 3-sn-phosphoglycerides. The chain is Acidic phospholipase A2 CC-PLA2-1 from Cerastes cerastes (Horned desert viper).